A 469-amino-acid polypeptide reads, in one-letter code: MSEVRVRFAPSPTGYLHVGGARTALFNYLYARKTGGKFILRIEDTDLERSEKVFEEQLISALKWLGLEWDEGPDIGGQYGPYRQSERVHLYHEYAQKLIEEGKAYEVYAYPEEIEQLREKLLSEGKAPHYTREMLEPYNTPERKKEYEEKGLKPAVYFSMLRKDYVINDVVKGEVVFKAGSVGDFALLRSNGMPTYNYACVIDDGLMKITHVLRGDDHLSNTVKQVALYEAFGWPTPVFGHVSMILGPDGSKLSKRHGATSVEEFKSRGYLPEALVNFLALLGWSHPEGKEILTKQELIESFSLERLVKNPAIFNPEKLKWMNSEHIRMKSMDELVKIAKPFLQKDVDDEYFAKILHAVKDRIEELSQLPELTDIFFEKPHQLPEKTPEAIETYTNLLSELKKIEKWDKDSIYAAFKTAMKSAKLKGKDFYMTLRLVLTGKTEGPELIDILEILGKDEVIERISLYLNK.

The 'HIGH' region motif lies at 10–20 (PSPTGYLHVGG). Positions 252-256 (KLSKR) match the 'KMSKS' region motif. Lysine 255 contributes to the ATP binding site.

It belongs to the class-I aminoacyl-tRNA synthetase family. Glutamate--tRNA ligase type 1 subfamily. Monomer.

The protein localises to the cytoplasm. The catalysed reaction is tRNA(Glu) + L-glutamate + ATP = L-glutamyl-tRNA(Glu) + AMP + diphosphate. In terms of biological role, catalyzes the attachment of glutamate to tRNA(Glu) in a two-step reaction: glutamate is first activated by ATP to form Glu-AMP and then transferred to the acceptor end of tRNA(Glu). This chain is Glutamate--tRNA ligase 1, found in Fervidobacterium nodosum (strain ATCC 35602 / DSM 5306 / Rt17-B1).